The chain runs to 158 residues: Transcription elongation factor GreA (158 aa).

Residues 3–75 (TEKTYPMTQE…TQLENMIRNA (73 aa)) adopt a coiled-coil conformation.

Belongs to the GreA/GreB family.

Functionally, necessary for efficient RNA polymerase transcription elongation past template-encoded arresting sites. The arresting sites in DNA have the property of trapping a certain fraction of elongating RNA polymerases that pass through, resulting in locked ternary complexes. Cleavage of the nascent transcript by cleavage factors such as GreA or GreB allows the resumption of elongation from the new 3'terminus. GreA releases sequences of 2 to 3 nucleotides. This Bacillus cereus (strain ATCC 14579 / DSM 31 / CCUG 7414 / JCM 2152 / NBRC 15305 / NCIMB 9373 / NCTC 2599 / NRRL B-3711) protein is Transcription elongation factor GreA.